The chain runs to 342 residues: Dihydroorotate dehydrogenase (quinone) (342 aa).

FMN-binding positions include 61–65 and Thr-85; that span reads AGLDK. Lys-65 serves as a coordination point for substrate. Residue 110–114 participates in substrate binding; it reads NRMGF. FMN is bound by residues Asn-138 and Asn-171. Asn-171 contacts substrate. The active-site Nucleophile is Ser-174. Substrate is bound at residue Asn-176. Residues Lys-216 and Thr-244 each coordinate FMN. 245–246 serves as a coordination point for substrate; it reads NT. FMN-binding positions include Gly-267, Gly-296, and 317 to 318; that span reads YS.

This sequence belongs to the dihydroorotate dehydrogenase family. Type 2 subfamily. As to quaternary structure, monomer. FMN is required as a cofactor.

It localises to the cell membrane. The catalysed reaction is (S)-dihydroorotate + a quinone = orotate + a quinol. Its pathway is pyrimidine metabolism; UMP biosynthesis via de novo pathway; orotate from (S)-dihydroorotate (quinone route): step 1/1. In terms of biological role, catalyzes the conversion of dihydroorotate to orotate with quinone as electron acceptor. This Pseudomonas aeruginosa (strain LESB58) protein is Dihydroorotate dehydrogenase (quinone).